Reading from the N-terminus, the 434-residue chain is Nicotinate phosphoribosyltransferase (434 aa).

At histidine 242 the chain carries Phosphohistidine; by autocatalysis.

The protein belongs to the NAPRTase family. In terms of processing, transiently phosphorylated on a His residue during the reaction cycle. Phosphorylation strongly increases the affinity for substrates and increases the rate of nicotinate D-ribonucleotide production. Dephosphorylation regenerates the low-affinity form of the enzyme, leading to product release.

The catalysed reaction is nicotinate + 5-phospho-alpha-D-ribose 1-diphosphate + ATP + H2O = nicotinate beta-D-ribonucleotide + ADP + phosphate + diphosphate. It participates in cofactor biosynthesis; NAD(+) biosynthesis; nicotinate D-ribonucleotide from nicotinate: step 1/1. Catalyzes the synthesis of beta-nicotinate D-ribonucleotide from nicotinate and 5-phospho-D-ribose 1-phosphate at the expense of ATP. In Brucella melitensis biotype 1 (strain ATCC 23456 / CCUG 17765 / NCTC 10094 / 16M), this protein is Nicotinate phosphoribosyltransferase.